A 609-amino-acid polypeptide reads, in one-letter code: N-acetyltransferase ESCO2 (609 aa).

Disordered stretches follow at residues 1-71, 100-165, 197-241, and 314-357; these read MLSR…RVSP, EAKS…TDQV, KKPT…SPVR, and PDHD…LTAT. 2 stretches are compositionally biased toward polar residues: residues 13-22 and 41-54; these read AESNPSKKQI and ISLN…STPK. Residues 126 to 135 are compositionally biased toward basic residues; it reads PAKKVQKKPR. Over residues 214-230 the composition is skewed to basic and acidic residues; that stretch reads PTYEKPSIRKPVREKEL. Residues 345-355 are compositionally biased toward polar residues; that stretch reads PLNSSTPSALT. The CCHH-type zinc-finger motif lies at 392 to 416; it reads TTCASCGMLYSTDSPEDNFQHTQFH.

It belongs to the acetyltransferase family. ECO subfamily.

The protein localises to the nucleus. It is found in the chromosome. The enzyme catalyses L-lysyl-[protein] + acetyl-CoA = N(6)-acetyl-L-lysyl-[protein] + CoA + H(+). Acetyltransferase required for the establishment of sister chromatid cohesion. Couples the processes of cohesion and DNA replication to ensure that only sister chromatids become paired together. Essential for early development. The sequence is that of N-acetyltransferase ESCO2 (esco2) from Danio rerio (Zebrafish).